We begin with the raw amino-acid sequence, 426 residues long: Serine--tRNA ligase (426 aa).

233 to 235 (TSE) is an L-serine binding site. An ATP-binding site is contributed by 264 to 266 (RSE). L-serine is bound at residue glutamate 287. 351 to 354 (EISS) lines the ATP pocket. Serine 387 contributes to the L-serine binding site.

It belongs to the class-II aminoacyl-tRNA synthetase family. Type-1 seryl-tRNA synthetase subfamily. Homodimer. The tRNA molecule binds across the dimer.

It localises to the cytoplasm. It catalyses the reaction tRNA(Ser) + L-serine + ATP = L-seryl-tRNA(Ser) + AMP + diphosphate + H(+). It carries out the reaction tRNA(Sec) + L-serine + ATP = L-seryl-tRNA(Sec) + AMP + diphosphate + H(+). The protein operates within aminoacyl-tRNA biosynthesis; selenocysteinyl-tRNA(Sec) biosynthesis; L-seryl-tRNA(Sec) from L-serine and tRNA(Sec): step 1/1. In terms of biological role, catalyzes the attachment of serine to tRNA(Ser). Is also able to aminoacylate tRNA(Sec) with serine, to form the misacylated tRNA L-seryl-tRNA(Sec), which will be further converted into selenocysteinyl-tRNA(Sec). In Colwellia psychrerythraea (strain 34H / ATCC BAA-681) (Vibrio psychroerythus), this protein is Serine--tRNA ligase.